The primary structure comprises 460 residues: MNTSHKTLKTIAILGQPNVGKSSLFNRLARERIAITSDFAGTTRDINKRKIALNGHEVELLDTGGMAKDALLSKEIKALNLKAAQMSDLILYVVDGKSIPSDEDIKLFREVFKTNPNCFLVINKIDNDKEKERAYAFSSFGMPKSFNISVSHNRGISALIDAVLNALSLNQIIEQDLDADILESLENNAPEEETKEEIIQVGIIGRVNVGKSSLLNALTKKERSLVSSVAGTTIDPIDETILIGDQKICFVDTAGIRHRGKILGIEKYALERTQKALEKSHIALLVLDVSAPFVELDEKISSLADKHSLGIILILNKWDIRYAPYEEIMATLKRKFRFLEYAPVITTSCLKARHIDEIKHKIIEVYECFSRRIPTSLLNSVITQATQKHPLPSDGGKLVKVYYATQFATKPPQISLIMNRPKALHFSYKRYLINTLRKEFNFLGTPLILNAKDKKSAQQN.

2 consecutive EngA-type G domains span residues 9 to 171 (KTIA…SLNQ) and 199 to 370 (IQVG…ECFS). GTP-binding positions include 15-22 (GQPNVGKS), 62-66 (DTGGM), 123-126 (NKID), 205-212 (GRVNVGKS), 252-256 (DTAGI), and 316-319 (NKWD). In terms of domain architecture, KH-like spans 371-455 (RRIPTSLLNS…PLILNAKDKK (85 aa)).

This sequence belongs to the TRAFAC class TrmE-Era-EngA-EngB-Septin-like GTPase superfamily. EngA (Der) GTPase family. As to quaternary structure, associates with the 50S ribosomal subunit.

Its function is as follows. GTPase that plays an essential role in the late steps of ribosome biogenesis. The protein is GTPase Der of Helicobacter pylori (strain G27).